Consider the following 593-residue polypeptide: ATP-dependent lipid A-core flippase (593 aa).

6 helical membrane-spanning segments follow: residues 33–53 (IGIV…EAGI), 75–95 (WYVP…QYTS), 137–157 (AIVF…VTLV), 164–184 (IFLL…VAVI), 262–282 (QPLT…IAVV), and 292–312 (GGFV…KHLI). Residues 37–320 (VLAVVTMGVV…LIDVNQPLQR (284 aa)) form the ABC transmembrane type-1 domain. The region spanning 352-586 (IEFRAVSFDY…GGLYAHLHRI (235 aa)) is the ABC transporter domain. 386–393 (GPSGSGKT) serves as a coordination point for ATP.

Belongs to the ABC transporter superfamily. Lipid exporter (TC 3.A.1.106) family. As to quaternary structure, homodimer.

It is found in the cell inner membrane. The enzyme catalyses ATP + H2O + lipid A-core oligosaccharideSide 1 = ADP + phosphate + lipid A-core oligosaccharideSide 2.. Involved in lipopolysaccharide (LPS) biosynthesis. Translocates lipid A-core from the inner to the outer leaflet of the inner membrane. Transmembrane domains (TMD) form a pore in the inner membrane and the ATP-binding domain (NBD) is responsible for energy generation. This chain is ATP-dependent lipid A-core flippase, found in Burkholderia orbicola (strain AU 1054).